The following is a 205-amino-acid chain: Large ribosomal subunit protein uL3 (205 aa).

The disordered stretch occupies residues glycine 126–glycine 150.

The protein belongs to the universal ribosomal protein uL3 family. Part of the 50S ribosomal subunit. Forms a cluster with proteins L14 and L19.

Functionally, one of the primary rRNA binding proteins, it binds directly near the 3'-end of the 23S rRNA, where it nucleates assembly of the 50S subunit. The sequence is that of Large ribosomal subunit protein uL3 from Dehalococcoides mccartyi (strain ATCC BAA-2100 / JCM 16839 / KCTC 5957 / BAV1).